The chain runs to 216 residues: Protein Syd (216 aa).

Belongs to the Syd family.

Its subcellular location is the cell inner membrane. Functionally, interacts with the SecY protein in vivo. May bind preferentially to an uncomplexed state of SecY, thus functioning either as a chelating agent for excess SecY in the cell or as a regulatory factor that negatively controls the translocase function. The protein is Protein Syd of Shewanella sp. (strain MR-7).